A 183-amino-acid polypeptide reads, in one-letter code: ATP-dependent protease subunit HslV (183 aa).

Residue T10 is part of the active site. Na(+) is bound by residues A164, C167, and T170.

The protein belongs to the peptidase T1B family. HslV subfamily. In terms of assembly, a double ring-shaped homohexamer of HslV is capped on each side by a ring-shaped HslU homohexamer. The assembly of the HslU/HslV complex is dependent on binding of ATP.

Its subcellular location is the cytoplasm. It catalyses the reaction ATP-dependent cleavage of peptide bonds with broad specificity.. Its activity is regulated as follows. Allosterically activated by HslU binding. Functionally, protease subunit of a proteasome-like degradation complex believed to be a general protein degrading machinery. In Rhizorhabdus wittichii (strain DSM 6014 / CCUG 31198 / JCM 15750 / NBRC 105917 / EY 4224 / RW1) (Sphingomonas wittichii), this protein is ATP-dependent protease subunit HslV.